A 138-amino-acid chain; its full sequence is Putative pre-16S rRNA nuclease (138 aa).

It belongs to the YqgF nuclease family.

It localises to the cytoplasm. Its function is as follows. Could be a nuclease involved in processing of the 5'-end of pre-16S rRNA. This is Putative pre-16S rRNA nuclease from Fusobacterium nucleatum subsp. nucleatum (strain ATCC 25586 / DSM 15643 / BCRC 10681 / CIP 101130 / JCM 8532 / KCTC 2640 / LMG 13131 / VPI 4355).